Consider the following 2524-residue polypeptide: Highly reducing polyketide synthase Preu5 (2524 aa).

The Ketosynthase family 3 (KS3) domain maps to 5-426 (DTPIAIIGLS…GSNSAIVIEK (422 aa)). Active-site for beta-ketoacyl synthase activity residues include Cys-175, His-310, and His-350. The tract at residues 431–470 (DELGHETNGTNGVSVSNGVNGSNGFTNGSNGTNGHAENGN) is disordered. Residues 437–464 (TNGTNGVSVSNGVNGSNGFTNGSNGTNG) are compositionally biased toward low complexity. The malonyl-CoA:ACP transacylase (MAT) domain stretch occupies residues 559-882 (VFTGQGAQYA…TYLPSLVRNV (324 aa)). The For malonyltransferase activity role is filled by Ser-648. The tract at residues 950-1084 (HELLGRRVVS…GQIEPEFADM (135 aa)) is N-terminal hotdog fold. Residues 950 to 1264 (HELLGRRVVS…FRNIGSADEN (315 aa)) enclose the PKS/mFAS DH domain. Positions 950–1266 (HELLGRRVVS…NIGSADENID (317 aa)) are dehydratase (DH) domain. His-982 acts as the Proton acceptor; for dehydratase activity in catalysis. The C-terminal hotdog fold stretch occupies residues 1102-1264 (ADLLEHDIEG…FRNIGSADEN (163 aa)). Asp-1171 acts as the Proton donor; for dehydratase activity in catalysis. The methyltransferase (CMet) domain stretch occupies residues 1418 to 1611 (SQAVGDLADN…IPGVWDSEVQ (194 aa)). An enoylreductase (ER) domain region spans residues 1825 to 2139 (GSPDSIYFRR…SGDHLGKIVV (315 aa)). The tract at residues 2164-2339 (GTYLVTGGTR…HTVSIALPIV (176 aa)) is ketoreductase (KR) domain. Positions 2445 to 2522 (DPLEGLTEAL…ALATDILSQR (78 aa)) constitute a Carrier domain. Residue Ser-2482 is modified to O-(pantetheine 4'-phosphoryl)serine.

Pantetheine 4'-phosphate serves as cofactor.

In terms of biological role, highly reducing polyketide synthase; part of a gene cluster that mediates the biosynthesis of a yet unidentified natural product. The protein is Highly reducing polyketide synthase Preu5 of Preussia isomera (Coprophilous fungus).